The following is a 184-amino-acid chain: Signal peptidase complex catalytic subunit SEC11 (184 aa).

Residues 1–28 lie on the Cytoplasmic side of the membrane; sequence MDFIKEQYNSLVLDLRKTFRNKRDGLSH. Residues 29 to 49 form a helical; Signal-anchor for type II membrane protein membrane-spanning segment; sequence ILNVICLLLNALMIWKLLVVF. Topologically, residues 50 to 184 are lumenal; the sequence is TGCESPVVVV…MLIMILMGYE (135 aa). Catalysis depends on charge relay system residues serine 63, histidine 101, and aspartate 127. Residues 170 to 181 are C-terminal short (CTS) helix; sequence AIVSIMLIMILM.

This sequence belongs to the peptidase S26B family. In terms of assembly, component of the signal peptidase complex (SPC) composed of a catalytic subunit SEC11/SPC21 and three accessory subunits SPC25, SPC3/SPC22, SPC1/SPC12. Within the complex, interacts with SPC25. The complex induces a local thinning of the ER membrane which is used to measure the length of the signal peptide (SP) h-region of protein substrates. This ensures the selectivity of the complex towards h-regions shorter than 18-20 amino acids. The complex interacts with the SEC61 channel-forming translocon complex and is involved in the import of classical signal sequence-containing proteins. In terms of processing, phosphorylated. Phosphorylation increases catalytic activity.

The protein resides in the endoplasmic reticulum membrane. The enzyme catalyses Cleavage of hydrophobic, N-terminal signal or leader sequences from secreted and periplasmic proteins.. Phosphorylation increases catalytic activity. Ca(2+) slightly increases catalytic activity in vitro. In terms of biological role, catalytic component of the signal peptidase complex (SPC) which catalyzes the cleavage of N-terminal signal sequences from nascent proteins as they are translocated into the lumen of the endoplasmic reticulum. Specifically cleaves N-terminal signal peptides that contain a hydrophobic alpha-helix (h-region) shorter than 18-20 amino acids. In Plasmodium falciparum (isolate 3D7), this protein is Signal peptidase complex catalytic subunit SEC11.